We begin with the raw amino-acid sequence, 398 residues long: Cholinephosphotransferase 1 (398 aa).

A2 is modified (N-acetylalanine). The Cytoplasmic segment spans residues 2-62 (AAGAGARPAP…LLQWIPLWIA (61 aa)). A helical transmembrane segment spans residues 63 to 83 (PNTITLFGLAINLFTTLVLIF). A CDP-choline-binding site is contributed by N64. Over 84–93 (YCPTVTEEAP) the chain is Lumenal. The helical transmembrane segment at 94–118 (YWTYLLCALGLFIYQSLDAIDGKQA) threads the bilayer. 2 residues coordinate Mg(2+): D111 and D114. R119 contacts CDP-choline. At 119-125 (RRTNSCS) the chain is on the cytoplasmic side. A helical transmembrane segment spans residues 126 to 150 (PLGELFDHGCDSLSTVFMAIGASIA). D132 is a binding site for Mg(2+). H133 (proton acceptor) is an active-site residue. D136 is a Mg(2+) binding site. Topologically, residues 151-160 (VRLGTHPDWL) are lumenal. A helical membrane pass occupies residues 161–179 (FFCSFVGMFMFYCAHWQTY). Over 180–190 (VSGVLRFGRVD) the chain is Cytoplasmic. The chain crosses the membrane as a helical span at residues 191–207 (VTEIQVALVIVFLLSTF). At 208-222 (GGAMMWDYTIPILEI) the chain is on the lumenal side. Residues 223–248 (KLKILPVLGVVGGLIFSCSNYFHVIL) form a helical membrane-spanning segment. Residues 249–265 (HGGVGKNGSTIAGTSVL) are Cytoplasmic-facing. A helical membrane pass occupies residues 266–281 (SPGLHIGLIIILAIMI). At 282–293 (YKKSATNVFEKH) the chain is on the lumenal side. The chain crosses the membrane as a helical span at residues 294–316 (PCLYTLMFGCVFAKVAQKLVIAH). Residues 317–329 (MTKSELYLQDTVF) lie on the Cytoplasmic side of the membrane. Residues 330–339 (IGPGLLFLDQ) traverse the membrane as a helical segment. Residues 340-346 (YFNNFID) are Lumenal-facing. Residues 347 to 376 (EYVVLWIAMVITSFDMMIYFSSLCLQISRH) form a helical membrane-spanning segment. The Cytoplasmic portion of the chain corresponds to 377 to 398 (LHLSIFKTSYQQAPEQVHKHID).

Belongs to the CDP-alcohol phosphatidyltransferase class-I family. It depends on Mg(2+) as a cofactor. Requires Mn(2+) as cofactor.

The protein resides in the golgi apparatus membrane. It catalyses the reaction CDP-choline + a 1,2-diacyl-sn-glycerol = a 1,2-diacyl-sn-glycero-3-phosphocholine + CMP + H(+). The catalysed reaction is 1-octadecanoyl-2-(5Z,8Z,11Z,14Z-eicosatetraenoyl)-sn-glycerol + CDP-choline = 1-octadecanoyl-2-(5Z,8Z,11Z,14Z-eicosatetraenoyl)-sn-glycero-3-phosphocholine + CMP + H(+). It carries out the reaction 1-hexadecanoyl-2-(9Z-octadecenoyl)-sn-glycerol + CDP-choline = 1-hexadecanoyl-2-(9Z-octadecenoyl)-sn-glycero-3-phosphocholine + CMP + H(+). The enzyme catalyses 1-hexadecanoyl-2-(4Z,7Z,10Z,13Z,16Z,19Z-docosahexaenoyl)-sn-glycerol + CDP-choline = 1-hexadecanoyl-2-(4Z,7Z,10Z,13Z,16Z,19Z-docosahexaenoyl)-sn-glycero-3-phosphocholine + CMP + H(+). It catalyses the reaction 1,2-dioctanoyl-sn-glycerol + CDP-choline = 1,2-dioctanoyl-sn-glycero-3-phosphocholine + CMP + H(+). It participates in phospholipid metabolism; phosphatidylcholine biosynthesis; phosphatidylcholine from phosphocholine: step 2/2. Its function is as follows. Catalyzes the final step of de novo phosphatidylcholine (PC) synthesis, i.e. the transfer of choline phosphate from CDP-choline to the free hydroxyl of a diacylglycerol (DAG), producing a PC. It thereby plays a central role in the formation and maintenance of vesicular membranes. The protein is Cholinephosphotransferase 1 of Rattus norvegicus (Rat).